The sequence spans 243 residues: Zinc import ATP-binding protein ZnuC (243 aa).

Residues 4–219 form the ABC transporter domain; sequence IAAHHLAVRR…PEYRALFGHG (216 aa). 36 to 43 serves as a coordination point for ATP; sequence GPNGSGKS.

This sequence belongs to the ABC transporter superfamily. Zinc importer (TC 3.A.1.15.5) family. As to quaternary structure, the complex is composed of two ATP-binding proteins (ZnuC), two transmembrane proteins (ZnuB) and a solute-binding protein (ZnuA).

The protein localises to the cell inner membrane. It catalyses the reaction Zn(2+)(out) + ATP(in) + H2O(in) = Zn(2+)(in) + ADP(in) + phosphate(in) + H(+)(in). Functionally, part of the ABC transporter complex ZnuABC involved in zinc import. Responsible for energy coupling to the transport system. The sequence is that of Zinc import ATP-binding protein ZnuC from Cereibacter sphaeroides (strain ATCC 17023 / DSM 158 / JCM 6121 / CCUG 31486 / LMG 2827 / NBRC 12203 / NCIMB 8253 / ATH 2.4.1.) (Rhodobacter sphaeroides).